The sequence spans 157 residues: Ribosome-binding factor A (157 aa).

The disordered stretch occupies residues 124-157; the sequence is SAGAQFAGDADPYRKPESDDESDTAAKTDGDAAE. The span at 147–157 shows a compositional bias: basic and acidic residues; sequence TAAKTDGDAAE.

It belongs to the RbfA family. In terms of assembly, monomer. Binds 30S ribosomal subunits, but not 50S ribosomal subunits or 70S ribosomes.

The protein resides in the cytoplasm. Its function is as follows. One of several proteins that assist in the late maturation steps of the functional core of the 30S ribosomal subunit. Associates with free 30S ribosomal subunits (but not with 30S subunits that are part of 70S ribosomes or polysomes). Required for efficient processing of 16S rRNA. May interact with the 5'-terminal helix region of 16S rRNA. The polypeptide is Ribosome-binding factor A (Streptomyces avermitilis (strain ATCC 31267 / DSM 46492 / JCM 5070 / NBRC 14893 / NCIMB 12804 / NRRL 8165 / MA-4680)).